The chain runs to 563 residues: Kdo(2)-lipid A phosphoethanolamine 7''-transferase (563 aa).

Topologically, residues 1-9 are cytoplasmic; that stretch reads MRYIKSITQ. Residues 10-30 form a helical membrane-spanning segment; it reads QKLSFLLAIYIGLFMNGAVFY. Topologically, residues 31 to 48 are periplasmic; it reads RRFGSYAHDFTVWKGISA. The helical transmembrane segment at 49–69 threads the bilayer; that stretch reads VVELAATVLVTFFLLRLLSLF. At 70–79 the chain is on the cytoplasmic side; sequence GRRSWRILAS. A helical membrane pass occupies residues 80 to 100; sequence LVVLFSAGASYYMTFLNVVIG. Residues 101 to 117 lie on the Periplasmic side of the membrane; sequence YGIIASVMTTDIDLSKE. The chain crosses the membrane as a helical span at residues 118-138; sequence VVGLNFILWLIAVSALPLILI. Residues 139-159 lie on the Cytoplasmic side of the membrane; the sequence is WNNRCRYTLLRQLRTPGQRIR. A helical membrane pass occupies residues 160–180; sequence SLAVVVLAGIMVWAPIRLLDI. Residues 181–563 lie on the Periplasmic side of the membrane; sequence QQKKVERATG…IPQAKEAAAN (383 aa).

This sequence belongs to the phosphoethanolamine transferase family. EptB subfamily. The cofactor is Ca(2+).

The protein localises to the cell inner membrane. It carries out the reaction alpha-Kdo-(2-&gt;4)-alpha-Kdo-(2-&gt;6)-lipid A (E. coli) + a 1,2-diacyl-sn-glycero-3-phosphoethanolamine = 7-O-[2-aminoethoxy(hydroxy)phosphoryl]-alpha-Kdo-(2-&gt;4)-alpha-Kdo-(2-&gt;6)-lipid A + a 1,2-diacyl-sn-glycerol. It catalyses the reaction alpha-Kdo-(2-&gt;4)-alpha-Kdo-(2-&gt;6)-lipid IVA (E. coli) + a 1,2-diacyl-sn-glycero-3-phosphoethanolamine = 7-O-[2-aminoethoxy(hydroxy)phosphoryl]-alpha-Kdo-(2-&gt;4)-alpha-Kdo-(2-&gt;6)-lipid IVA (E. coli) + a 1,2-diacyl-sn-glycerol. With respect to regulation, inhibited by calcium concentrations higher than 1 mM. Its function is as follows. Catalyzes the addition of a phosphoethanolamine (pEtN) moiety to the outer 3-deoxy-D-manno-octulosonic acid (Kdo) residue of a Kdo(2)-lipid A. Phosphatidylethanolamines with one unsaturated acyl group function as pEtN donors and the reaction releases diacylglycerol. This chain is Kdo(2)-lipid A phosphoethanolamine 7''-transferase (eptB), found in Escherichia coli (strain K12).